The sequence spans 198 residues: Holliday junction branch migration complex subunit RuvA (198 aa).

Residues 1 to 63 (MYDYIKGQLT…EDAHLLFGFH (63 aa)) are domain I. The domain II stretch occupies residues 64–142 (TEDEKDVFLK…EAPQETGHTK (79 aa)). The segment at 143 to 147 (ARSNK) is flexible linker. Residues 148-198 (AGNTQLDEAIEALLALGYKAKELKKIRAFFEGTSETAEQYIKSALKLLMKG) form a domain III region.

It belongs to the RuvA family. Homotetramer. Forms an RuvA(8)-RuvB(12)-Holliday junction (HJ) complex. HJ DNA is sandwiched between 2 RuvA tetramers; dsDNA enters through RuvA and exits via RuvB. An RuvB hexamer assembles on each DNA strand where it exits the tetramer. Each RuvB hexamer is contacted by two RuvA subunits (via domain III) on 2 adjacent RuvB subunits; this complex drives branch migration. In the full resolvosome a probable DNA-RuvA(4)-RuvB(12)-RuvC(2) complex forms which resolves the HJ.

Its subcellular location is the cytoplasm. In terms of biological role, the RuvA-RuvB-RuvC complex processes Holliday junction (HJ) DNA during genetic recombination and DNA repair, while the RuvA-RuvB complex plays an important role in the rescue of blocked DNA replication forks via replication fork reversal (RFR). RuvA specifically binds to HJ cruciform DNA, conferring on it an open structure. The RuvB hexamer acts as an ATP-dependent pump, pulling dsDNA into and through the RuvAB complex. HJ branch migration allows RuvC to scan DNA until it finds its consensus sequence, where it cleaves and resolves the cruciform DNA. The polypeptide is Holliday junction branch migration complex subunit RuvA (Streptococcus pyogenes serotype M1).